Here is a 423-residue protein sequence, read N- to C-terminus: Exodeoxyribonuclease 7 large subunit (423 aa).

This sequence belongs to the XseA family. In terms of assembly, heterooligomer composed of large and small subunits.

It is found in the cytoplasm. It catalyses the reaction Exonucleolytic cleavage in either 5'- to 3'- or 3'- to 5'-direction to yield nucleoside 5'-phosphates.. In terms of biological role, bidirectionally degrades single-stranded DNA into large acid-insoluble oligonucleotides, which are then degraded further into small acid-soluble oligonucleotides. This chain is Exodeoxyribonuclease 7 large subunit, found in Natranaerobius thermophilus (strain ATCC BAA-1301 / DSM 18059 / JW/NM-WN-LF).